Here is a 314-residue protein sequence, read N- to C-terminus: L-lactate dehydrogenase (314 aa).

Residues Val17, Asp38, Lys43, Tyr69, and 83-84 contribute to the NAD(+) site; that span reads GA. Gln86 and Arg92 together coordinate substrate. Residues Ser105, 122-124, and Ser147 contribute to the NAD(+) site; that span reads ASN. 124-127 is a substrate binding site; sequence NPVD. 152 to 155 contributes to the substrate binding site; that stretch reads DSAR. Positions 157 and 172 each coordinate beta-D-fructose 1,6-bisphosphate. His179 functions as the Proton acceptor in the catalytic mechanism. Tyr223 is modified (phosphotyrosine). Thr232 contributes to the substrate binding site.

It belongs to the LDH/MDH superfamily. LDH family. As to quaternary structure, homotetramer.

The protein resides in the cytoplasm. It catalyses the reaction (S)-lactate + NAD(+) = pyruvate + NADH + H(+). The protein operates within fermentation; pyruvate fermentation to lactate; (S)-lactate from pyruvate: step 1/1. With respect to regulation, allosterically activated by fructose 1,6-bisphosphate (FBP). Its function is as follows. Catalyzes the conversion of lactate to pyruvate. The protein is L-lactate dehydrogenase of Corynebacterium glutamicum (strain ATCC 13032 / DSM 20300 / JCM 1318 / BCRC 11384 / CCUG 27702 / LMG 3730 / NBRC 12168 / NCIMB 10025 / NRRL B-2784 / 534).